We begin with the raw amino-acid sequence, 325 residues long: Ribosomal RNA small subunit methyltransferase H (325 aa).

S-adenosyl-L-methionine is bound by residues 42 to 44, Asp-62, Phe-86, Asp-105, and Gln-112; that span reads GGH.

It belongs to the methyltransferase superfamily. RsmH family.

It localises to the cytoplasm. The catalysed reaction is cytidine(1402) in 16S rRNA + S-adenosyl-L-methionine = N(4)-methylcytidine(1402) in 16S rRNA + S-adenosyl-L-homocysteine + H(+). Its function is as follows. Specifically methylates the N4 position of cytidine in position 1402 (C1402) of 16S rRNA. The chain is Ribosomal RNA small subunit methyltransferase H from Cupriavidus metallidurans (strain ATCC 43123 / DSM 2839 / NBRC 102507 / CH34) (Ralstonia metallidurans).